The sequence spans 344 residues: Anthranilate phosphoribosyltransferase (344 aa).

5-phospho-alpha-D-ribose 1-diphosphate contacts are provided by residues glycine 83, glycine 86–aspartate 87, threonine 91, asparagine 93–threonine 96, lysine 111–serine 119, and serine 123. Glycine 83 contributes to the anthranilate binding site. A Mg(2+)-binding site is contributed by serine 95. Arginine 169 is a binding site for anthranilate. 2 residues coordinate Mg(2+): aspartate 228 and glutamate 229.

This sequence belongs to the anthranilate phosphoribosyltransferase family. Homodimer. Mg(2+) serves as cofactor.

The enzyme catalyses N-(5-phospho-beta-D-ribosyl)anthranilate + diphosphate = 5-phospho-alpha-D-ribose 1-diphosphate + anthranilate. Its pathway is amino-acid biosynthesis; L-tryptophan biosynthesis; L-tryptophan from chorismate: step 2/5. Catalyzes the transfer of the phosphoribosyl group of 5-phosphorylribose-1-pyrophosphate (PRPP) to anthranilate to yield N-(5'-phosphoribosyl)-anthranilate (PRA). The protein is Anthranilate phosphoribosyltransferase of Methylibium petroleiphilum (strain ATCC BAA-1232 / LMG 22953 / PM1).